The following is a 215-amino-acid chain: Cytochrome b6 (215 aa).

Residues 32 to 52 traverse the membrane as a helical segment; that stretch reads IFYCLGGITLTCFLVQVATGF. C35 is a heme c binding site. Heme b-binding residues include H86 and H100. The next 3 membrane-spanning stretches (helical) occupy residues 90–110, 116–136, and 186–206; these read ASMMVLMMILHVFRVYLTGGF, LTWVTGVVLGVLTASFGVTGY, and LHTFVLPLLTAVFMLMHFLMI. H187 and H202 together coordinate heme b.

The protein belongs to the cytochrome b family. PetB subfamily. In terms of assembly, the 4 large subunits of the cytochrome b6-f complex are cytochrome b6, subunit IV (17 kDa polypeptide, PetD), cytochrome f and the Rieske protein, while the 4 small subunits are PetG, PetL, PetM and PetN. The complex functions as a dimer. Heme b serves as cofactor. Heme c is required as a cofactor.

Its subcellular location is the plastid. It localises to the chloroplast thylakoid membrane. Component of the cytochrome b6-f complex, which mediates electron transfer between photosystem II (PSII) and photosystem I (PSI), cyclic electron flow around PSI, and state transitions. This is Cytochrome b6 from Gossypium barbadense (Sea Island cotton).